A 473-amino-acid chain; its full sequence is Cell division protein FtsZ homolog 2-2, chloroplastic (473 aa).

GTP-binding positions include Gly124–Asn128, Gly213–Gly215, Glu244, and Arg248. Position 282 is a phosphothreonine; by PGK1 (Thr282). Asp292 lines the GTP pocket. The segment at Glu424 to Ser455 is disordered. A compositionally biased stretch (polar residues) spans Arg445–Ser454.

It belongs to the FtsZ family. In terms of assembly, aggregates to form a contractile ring-like structure; contraction of the ring was accompanied by an increase in the filament turnover rate. Self-interacts and binds to FTSZ1 in heteropolymers to form two morphologically distinct types of filaments, termed type-I (smooth filaments) and -II (rough filaments), in a GTP-dependent manner. Part of a complex made of ARC3, ARC6, FTSZ1 and FTSZ2. Interacts (via C-terminus) with ARC6. Interacts with CDP1/PARC6. Binds to PGK1. Post-translationally, phosphorylation at Thr-282 is required for the formation of contractile ring at the chloroplast midpoint.

The protein resides in the plastid. The protein localises to the chloroplast stroma. Its subcellular location is the chloroplast thylakoid membrane. Functionally, exhibits GTPase activity. Component of the plastid division machinery that forms a contractile ring at the division site. Contributes to plastid division in the vegetative shoot apex, at the shoot apical meristem (SAM) where the proplastid-to-chloroplast transition takes place. This is Cell division protein FtsZ homolog 2-2, chloroplastic from Arabidopsis thaliana (Mouse-ear cress).